The primary structure comprises 206 residues: Large ribosomal subunit protein uL4 (206 aa).

Positions G46 to F89 are disordered. Residues S59–G70 are compositionally biased toward basic residues.

It belongs to the universal ribosomal protein uL4 family. Part of the 50S ribosomal subunit.

In terms of biological role, one of the primary rRNA binding proteins, this protein initially binds near the 5'-end of the 23S rRNA. It is important during the early stages of 50S assembly. It makes multiple contacts with different domains of the 23S rRNA in the assembled 50S subunit and ribosome. Its function is as follows. Forms part of the polypeptide exit tunnel. The protein is Large ribosomal subunit protein uL4 of Neisseria gonorrhoeae (strain NCCP11945).